A 291-amino-acid chain; its full sequence is D-alanyl-D-alanine carboxypeptidase (291 aa).

Residues methionine 1 to alanine 29 form the signal peptide. Serine 64 serves as the catalytic Acyl-ester intermediate. Lysine 67 (proton acceptor) is an active-site residue. Serine 125 is an active-site residue. Lysine 242 contacts substrate.

The protein belongs to the peptidase S11 family.

It is found in the secreted. It carries out the reaction Preferential cleavage: (Ac)2-L-Lys-D-Ala-|-D-Ala. Also transpeptidation of peptidyl-alanyl moieties that are N-acyl substituents of D-alanine.. Its pathway is cell wall biogenesis; peptidoglycan biosynthesis. Its function is as follows. Removes C-terminal D-alanyl residues from sugar-peptide cell wall precursors. The polypeptide is D-alanyl-D-alanine carboxypeptidase (Streptomyces sp. (strain K15)).